We begin with the raw amino-acid sequence, 46 residues long: uncharacterized protein (46 aa).

The chain crosses the membrane as a helical span at residues 12–34; it reads HFNHFVIALSFIYGLTELGYLLL.

The protein resides in the cell membrane. This is an uncharacterized protein from Bacillus subtilis (strain 168).